A 221-amino-acid chain; its full sequence is NAD(P)H-hydrate epimerase (221 aa).

In terms of domain architecture, YjeF N-terminal spans 10–211 (MQQYDQYTIN…DIGIYSPAEL (202 aa)). Position 58–62 (58–62 (NNGGD)) interacts with (6S)-NADPHX. Asparagine 59 and aspartate 121 together coordinate K(+). (6S)-NADPHX-binding positions include 125-131 (GIGLSKP) and aspartate 154. Residue serine 157 coordinates K(+).

It belongs to the NnrE/AIBP family. The cofactor is K(+).

The enzyme catalyses (6R)-NADHX = (6S)-NADHX. It catalyses the reaction (6R)-NADPHX = (6S)-NADPHX. Functionally, catalyzes the epimerization of the S- and R-forms of NAD(P)HX, a damaged form of NAD(P)H that is a result of enzymatic or heat-dependent hydration. This is a prerequisite for the S-specific NAD(P)H-hydrate dehydratase to allow the repair of both epimers of NAD(P)HX. This Weissella koreensis (strain KACC 15510) protein is NAD(P)H-hydrate epimerase.